The following is a 75-amino-acid chain: Sec-independent protein translocase protein TatA (75 aa).

Residues 1 to 21 (MGSFSIWHWLVVLAIVLLVFG) traverse the membrane as a helical segment. Residues 41-75 (KGMRDEDKPNAQLGDESRTQDASRTAQDEHDRNAR) are disordered.

This sequence belongs to the TatA/E family. The Tat system comprises two distinct complexes: a TatABC complex, containing multiple copies of TatA, TatB and TatC subunits, and a separate TatA complex, containing only TatA subunits. Substrates initially bind to the TatABC complex, which probably triggers association of the separate TatA complex to form the active translocon.

It localises to the cell inner membrane. Its function is as follows. Part of the twin-arginine translocation (Tat) system that transports large folded proteins containing a characteristic twin-arginine motif in their signal peptide across membranes. TatA could form the protein-conducting channel of the Tat system. The protein is Sec-independent protein translocase protein TatA of Stenotrophomonas maltophilia (strain K279a).